Here is a 184-residue protein sequence, read N- to C-terminus: Large ribosomal subunit protein uL6 (184 aa).

The protein belongs to the universal ribosomal protein uL6 family. Part of the 50S ribosomal subunit.

This protein binds to the 23S rRNA, and is important in its secondary structure. It is located near the subunit interface in the base of the L7/L12 stalk, and near the tRNA binding site of the peptidyltransferase center. The sequence is that of Large ribosomal subunit protein uL6 from Thermococcus gammatolerans (strain DSM 15229 / JCM 11827 / EJ3).